Reading from the N-terminus, the 383-residue chain is 3-dehydroquinate synthase (383 aa).

Residues 81 to 86 (EGEVSK), 115 to 119 (GVVGD), 139 to 140 (TS), K152, and K161 contribute to the NAD(+) site. Residues E194, H256, and H274 each coordinate Zn(2+).

It belongs to the sugar phosphate cyclases superfamily. Dehydroquinate synthase family. Requires Co(2+) as cofactor. The cofactor is Zn(2+). NAD(+) is required as a cofactor.

The protein localises to the cytoplasm. The catalysed reaction is 7-phospho-2-dehydro-3-deoxy-D-arabino-heptonate = 3-dehydroquinate + phosphate. It functions in the pathway metabolic intermediate biosynthesis; chorismate biosynthesis; chorismate from D-erythrose 4-phosphate and phosphoenolpyruvate: step 2/7. In terms of biological role, catalyzes the conversion of 3-deoxy-D-arabino-heptulosonate 7-phosphate (DAHP) to dehydroquinate (DHQ). This Nitrobacter winogradskyi (strain ATCC 25391 / DSM 10237 / CIP 104748 / NCIMB 11846 / Nb-255) protein is 3-dehydroquinate synthase.